A 152-amino-acid polypeptide reads, in one-letter code: Conglutin delta 1 (152 aa).

An N-terminal signal peptide occupies residues 1-22; sequence MAKLTILIALVAALVLVVHTSA. 4 disulfide bridges follow: Cys30–Cys101, Cys42–Cys89, Cys90–Cys137, and Cys103–Cys145.

Belongs to the 2S seed storage albumins family. Heterodimer of a small chain and a large chain; disulfide-linked. In terms of tissue distribution, expressed in developing cotyledons and in the embryonic axis of germinating seeds.

The protein resides in the endoplasmic reticulum. The protein is Conglutin delta 1 of Lupinus angustifolius (Narrow-leaved blue lupine).